Here is a 284-residue protein sequence, read N- to C-terminus: 2,3,4,5-tetrahydropyridine-2,6-dicarboxylate N-succinyltransferase (284 aa).

This sequence belongs to the transferase hexapeptide repeat family.

It is found in the cytoplasm. It catalyses the reaction (S)-2,3,4,5-tetrahydrodipicolinate + succinyl-CoA + H2O = (S)-2-succinylamino-6-oxoheptanedioate + CoA. It participates in amino-acid biosynthesis; L-lysine biosynthesis via DAP pathway; LL-2,6-diaminopimelate from (S)-tetrahydrodipicolinate (succinylase route): step 1/3. The polypeptide is 2,3,4,5-tetrahydropyridine-2,6-dicarboxylate N-succinyltransferase (Brucella abortus (strain S19)).